The chain runs to 362 residues: Putative glutamate--cysteine ligase 2-1 (362 aa).

Belongs to the glutamate--cysteine ligase type 2 family. YbdK subfamily.

It catalyses the reaction L-cysteine + L-glutamate + ATP = gamma-L-glutamyl-L-cysteine + ADP + phosphate + H(+). Its function is as follows. ATP-dependent carboxylate-amine ligase which exhibits weak glutamate--cysteine ligase activity. The sequence is that of Putative glutamate--cysteine ligase 2-1 from Streptomyces avermitilis (strain ATCC 31267 / DSM 46492 / JCM 5070 / NBRC 14893 / NCIMB 12804 / NRRL 8165 / MA-4680).